A 1769-amino-acid polypeptide reads, in one-letter code: U3 small nucleolar RNA-associated protein 10 (1769 aa).

The residue at position 2 (Ser-2) is an N-acetylserine. The HEAT repeat unit spans residues 1729-1767; sequence LVPVIAELLEDDDEEIEREVRTGLVKVVENVLGEPFDRY.

Belongs to the HEATR1/UTP10 family. In terms of assembly, interacts with snoRNA U3. Interacts with MPP10. Component of the ribosomal small subunit (SSU) processome composed of at least 40 protein subunits and snoRNA U3. In the absence of snoRNA3, forms a complex with other t-UTPs. This complex can associate with pre-18S ribosomal RNAs.

It localises to the nucleus. The protein localises to the nucleolus. It is found in the mitochondrion. In terms of biological role, involved in nucleolar processing of pre-18S ribosomal RNA. Required for optimal pre-ribosomal RNA transcription by RNA polymerase I together with a subset of U3 proteins required for transcription (t-UTPs). Involved in ribosome biosynthesis. In Saccharomyces cerevisiae (strain ATCC 204508 / S288c) (Baker's yeast), this protein is U3 small nucleolar RNA-associated protein 10 (UTP10).